A 233-amino-acid polypeptide reads, in one-letter code: Small ribosomal subunit protein uS3 (233 aa).

Residues 39 to 107 (VRQYLTKELA…PAQINIAEVR (69 aa)) form the KH type-2 domain.

It belongs to the universal ribosomal protein uS3 family. Part of the 30S ribosomal subunit. Forms a tight complex with proteins S10 and S14.

Binds the lower part of the 30S subunit head. Binds mRNA in the 70S ribosome, positioning it for translation. The chain is Small ribosomal subunit protein uS3 from Citrobacter koseri (strain ATCC BAA-895 / CDC 4225-83 / SGSC4696).